A 312-amino-acid chain; its full sequence is uncharacterized protein (312 aa).

A signal peptide spans 1-28 (MNSADTQEPKSFNHTDMWTAFGTTMSGA).

Functionally, the FAS-operon encodes genes involved in cytokinin production and in host plant fasciation (leafy gall). This is an uncharacterized protein from Rhodococcoides fascians (Rhodococcus fascians).